Consider the following 416-residue polypeptide: Sarcosine oxidase subunit beta (416 aa).

Residues Gly-41, His-42, Glu-63, Asn-71, Thr-76, and Ile-78 each coordinate FAD. His-182 carries the tele-8alpha-FMN histidine modification. FAD contacts are provided by Val-206, Gly-366, and Lys-368.

This sequence belongs to the SoxB family. As to quaternary structure, heterotetramer composed of subunits alpha (SoxA), beta (SoxB), gamma (SoxG) and delta (SoxD). It depends on FAD as a cofactor. The cofactor is FMN.

It is found in the cytoplasm. The catalysed reaction is sarcosine + (6S)-5,6,7,8-tetrahydrofolate + O2 = (6R)-5,10-methylene-5,6,7,8-tetrahydrofolate + glycine + H2O2. The enzyme catalyses sarcosine + O2 + H2O = formaldehyde + glycine + H2O2. In terms of biological role, in the presence of tetrahydrofolate, catalyzes the oxidative demethylation of sarcosine to yield glycine, 5,10-methylenetetrahydrofolate and hydrogen peroxide. In the absence of tetrahydrofolate, catalyzes the oxidative demethylation of sarcosine to yield glycine, formaldehyde and hydrogen peroxide. This Rhizobium meliloti (strain 1021) (Ensifer meliloti) protein is Sarcosine oxidase subunit beta (soxB).